The chain runs to 94 residues: Integration host factor subunit beta (94 aa).

It belongs to the bacterial histone-like protein family. As to quaternary structure, heterodimer of an alpha and a beta chain.

Its function is as follows. This protein is one of the two subunits of integration host factor, a specific DNA-binding protein that functions in genetic recombination as well as in transcriptional and translational control. This chain is Integration host factor subunit beta, found in Nitrosospira multiformis (strain ATCC 25196 / NCIMB 11849 / C 71).